Consider the following 250-residue polypeptide: Triosephosphate isomerase (250 aa).

Residue Asn-9–Lys-11 coordinates substrate. Catalysis depends on His-96, which acts as the Electrophile. The Proton acceptor role is filled by Glu-168. Residues Gly-174, Ser-216, and Gly-237–Gly-238 each bind substrate.

It belongs to the triosephosphate isomerase family. Homodimer.

Its subcellular location is the cytoplasm. The enzyme catalyses D-glyceraldehyde 3-phosphate = dihydroxyacetone phosphate. It functions in the pathway carbohydrate biosynthesis; gluconeogenesis. The protein operates within carbohydrate degradation; glycolysis; D-glyceraldehyde 3-phosphate from glycerone phosphate: step 1/1. In terms of biological role, involved in the gluconeogenesis. Catalyzes stereospecifically the conversion of dihydroxyacetone phosphate (DHAP) to D-glyceraldehyde-3-phosphate (G3P). This chain is Triosephosphate isomerase, found in Leptospira interrogans serogroup Icterohaemorrhagiae serovar Lai (strain 56601).